Consider the following 371-residue polypeptide: MSKIGFNPIKIKSFSKIKTYDDTLPSLKYVVLEPAGFPIRVSSENVKVSTDDPILFNIYARDQWIGEIVKEGDYLFDNSILPDYAFKVISTYPKEGGMITSETVFKLQTPKKVLRTQFKKAKFSEIIGQEEAKKKCRIIMKYLENPKLFGEWAPKNVLFYGPPGTGKTLMARALATETNSSFILVKAPELIGEHVGDASKMIRELYQRASESAPCIVFIDELDAIGLSREYQSLRGDVSEVVNALLTELDGIKENEGVVTIAATNNPAMLDPAIRSRFEEEIEFKLPNDEERLKIMELYAKKMPLPVKANLKEFVEKTKGFSGRDIKEKFLKPALHRAILEDRDYVSKEDLEWALKKILGNRREAPQHLYL.

161 to 168 (GPPGTGKT) serves as a coordination point for ATP.

The protein belongs to the AAA ATPase family.

The 26S proteasome is involved in the ATP-dependent degradation of ubiquitinated proteins. The regulatory (or ATPase) complex confers ATP dependency and substrate specificity to the 26S complex. This Methanocaldococcus jannaschii (strain ATCC 43067 / DSM 2661 / JAL-1 / JCM 10045 / NBRC 100440) (Methanococcus jannaschii) protein is Putative 26S proteasome regulatory subunit homolog MJ1494.